The chain runs to 430 residues: Functional amyloid transporter FapF (430 aa).

An N-terminal signal peptide occupies residues 1–24; sequence MHRSLSLRAVVCLSTLLPASLLYA. Topologically, residues 25-131 are periplasmic; sequence APDVDIETLK…EASGFFGNGK (107 aa). The stretch at 29–64 forms a coiled coil; that stretch reads DIETLKQELLELKQRYEAQQKALAVLEQRVRQVEDQ. The tract at residues 62–114 is disordered; that stretch reads EDQPATPAPKRLAKSPADFKQSGSTVAASSGTGGATGGSSYGQSLKDDSEPAQ. Gly residues predominate over residues 92-101; the sequence is GTGGATGGSS. The interval 113–125 is alpha helical plug; sequence AQSVSNLYNEASG. The chain crosses the membrane as a beta stranded span at residues 132 to 142; it reads FSFETGITYAR. The Extracellular portion of the chain corresponds to 143–172; it reads YDARQLTLNGFLALDSIFLGNINLDRIKAD. The beta stranded transmembrane segment at 173-183 threads the bilayer; it reads NWTLDLTGRYN. Topologically, residues 184-189 are periplasmic; sequence LDNRWQ. The chain crosses the membrane as a beta stranded span at residues 190-198; it reads FDVNVPVVY. Over 199–224 the chain is Extracellular; sequence RESTYQSGGASGGDPQATSEESVSRD. The segment at 203 to 223 is disordered; sequence YQSGGASGGDPQATSEESVSR. The beta stranded transmembrane segment at 225–238 threads the bilayer; that stretch reads PTIGDVNFGIAYKF. At 239-246 the chain is on the periplasmic side; that stretch reads LDESATMP. Residues 247-256 form a beta stranded membrane-spanning segment; that stretch reads DAVVSVRVKA. Residues 257 to 288 lie on the Extracellular side of the membrane; the sequence is PTGKEPFGIKLVRSTANDNLYVPESLPTGNGV. A beta stranded transmembrane segment spans residues 289 to 298; it reads WSITPGLSLV. Over 299 to 304 the chain is Periplasmic; that stretch reads KTFDPA. A beta stranded membrane pass occupies residues 305–314; sequence VLFGSVSYTH. Over 315-339 the chain is Extracellular; it reads NLEDSFDDISSDVNQKVGGKVRLGD. The beta stranded transmembrane segment at 340-348 threads the bilayer; the sequence is SFQFGVGVA. Residues 349-356 are Periplasmic-facing; the sequence is FALNERMS. A beta stranded membrane pass occupies residues 357 to 365; that stretch reads MSFSVSDLI. Residues 366–386 lie on the Extracellular side of the membrane; it reads QRKSKLKPDGGGWQSIVSSDA. The chain crosses the membrane as a beta stranded span at residues 387–397; that stretch reads NAGYFNVGMTI. The Periplasmic segment spans residues 398–404; that stretch reads AASENLT. Residues 405–412 traverse the membrane as a beta stranded segment; that stretch reads IVPNLAIG. Residues 413 to 419 lie on the Extracellular side of the membrane; sequence MTDDAPD. A beta stranded transmembrane segment spans residues 420 to 428; that stretch reads FTFSLKFPY. The Periplasmic portion of the chain corresponds to 429 to 430; that stretch reads YF.

The protein belongs to the amyloid transporter (TC 9.B.153) family. As to quaternary structure, homotrimer.

It localises to the cell outer membrane. Transports fibril components across the outer membrane. Upon overexpression of the endogenous six-gene locus (fapA-fapF) in situ cells form large clumps during liquid growth, make large amounts of biofilm and produce amyloid fibrils. Expression of the 6 gene operon in E.coli strain BL21(DE3) induces flocculation and biofilm formation with copious extracellular fibrils. This Pseudomonas fluorescens protein is Functional amyloid transporter FapF.